Consider the following 915-residue polypeptide: Pentatricopeptide repeat-containing protein At5g65560 (915 aa).

PPR repeat units follow at residues 182-216 (IIGC…KVCP), 217-251 (NIYT…GLDP), 252-286 (DFFT…GCRR), 287-321 (NEVA…ECFP), 322-356 (TVRT…GIKP), 357-391 (NIHT…GLMP), 392-426 (NVIT…KLSP), 427-460 (NTRT…KVLP), 461-495 (DVVT…GLVP), 496-530 (DQWT…GVNP), 531-565 (NVVM…NCLP), 566-600 (NSLT…GLQP), 601-635 (TVST…GTKP), 636-670 (DAHT…GVSP), 671-705 (DLFT…GCEP), 724-758 (KQKG…SVTP), 759-794 (NAKS…GISP), 795-829 (SELV…GHLP), 830-864 (QLES…GYYE), and 865-899 (DELA…GCKF).

Belongs to the PPR family. P subfamily.

The polypeptide is Pentatricopeptide repeat-containing protein At5g65560 (Arabidopsis thaliana (Mouse-ear cress)).